The sequence spans 243 residues: Voltage-gated monoatomic cation channel TMEM109 (243 aa).

The N-terminal stretch at 1–33 (MAGSGSSAPWGKHLLHAVLMVLVALVLLHSALA) is a signal peptide. The Lumenal segment spans residues 34-83 (QSHRDFAPPGQQRREAPVDLLTQIGRSVRETLDTWIGPETMHLISETLSQ). Residues 84 to 104 (VMWAISSAISVAFFALSGIAA) form a helical membrane-spanning segment. The Cytoplasmic portion of the chain corresponds to 105 to 135 (QLLTALGLDGDHLTQGLKLSPSQVQTFLLWG). The chain crosses the membrane as a helical span at residues 136–156 (AGALVVYWLLSLLLGLVLAVL). Over 157-185 (GRILGGLKLVIFLAGFVALVRSVPDPSTR) the chain is Lumenal. A helical transmembrane segment spans residues 186–205 (ALLLLALLTLYALLSRLTGS). Topologically, residues 206-243 (RASGAQLEAKVRGLERQVDELRWRQRRAAKGARSVEEE) are cytoplasmic.

As to quaternary structure, homooligomer. Interacts with CRYAB; in the cellular response to DNA damage. The N-terminus is blocked. Widely expressed. Expressed in skeletal, cardiac and smooth muscle cells, in brain, including neuroglial cells, cerebral cortex neurons and cerebellum, but not Purkinje cells. Also detected in Paneth and Goblet cells of the small intestine (but not in the epithelium), duodenal gland, pancreas, parotid gland, testis, thyroid gland and adrenal gland, as well as in epidermis, choroid plexus, ductus epididymidis, lymphocytes, fibroblasts, endothelial cells and seminiferous epithelial cells (at protein level). Not detected in mucous cells of the duodenal gland, in hepatocytes nor in uriniferous tubules.

Its subcellular location is the nucleus outer membrane. The protein localises to the endoplasmic reticulum membrane. It localises to the sarcoplasmic reticulum membrane. The enzyme catalyses K(+)(in) = K(+)(out). The catalysed reaction is Ca(2+)(in) = Ca(2+)(out). In terms of biological role, functions as a voltage-gated monoatomic cation channel permeable to both potassium and calcium. Plays a role in the cellular response to DNA damage. This Oryctolagus cuniculus (Rabbit) protein is Voltage-gated monoatomic cation channel TMEM109.